The sequence spans 535 residues: Berberine bridge enzyme-like 3 (535 aa).

Residues 1-19 (MKEALFGLYLVLLVSGLEA) form the signal peptide. A disulfide bond links C32 and C95. The N-linked (GlcNAc...) asparagine glycan is linked to N52. Residues 73 to 247 (NNKNLLAIVV…LSWKINLVEV (175 aa)) enclose the FAD-binding PCMH-type domain. A cross-link (6-(S-cysteinyl)-8alpha-(pros-histidyl)-FAD (His-Cys)) is located at residues 110-172 (HDNEGLSYVS…QTLAFPAGIC (63 aa)). N-linked (GlcNAc...) asparagine glycosylation is found at N214, N257, N292, N321, N341, N415, N439, and N444.

It belongs to the oxygen-dependent FAD-linked oxidoreductase family. The cofactor is FAD. In terms of processing, the FAD cofactor is bound via a bicovalent 6-S-cysteinyl, 8alpha-N1-histidyl FAD linkage.

It localises to the endoplasmic reticulum. It is found in the cell membrane. The protein resides in the secreted. Its subcellular location is the cell wall. Its function is as follows. Flavin-dependent oxidoreductase involved in the biosynthetic pathway to 4-hydroxyindole-3-carbonyl nitrile (4-OH-ICN), a cyanogenic metabolite required for inducible pathogen defense. Converts indole cyanohydrin into indole-3-carbonyl nitrile (ICN). The chain is Berberine bridge enzyme-like 3 from Arabidopsis thaliana (Mouse-ear cress).